The chain runs to 423 residues: Mannan endo-1,4-beta-mannosidase (423 aa).

Residues 1-27 (MKTITTARLPWAAQSFALGICLIALLG) form the signal peptide. In terms of domain architecture, GH26 spans 56-409 (METRSLFAFM…YADEFTAFNR (354 aa)). Substrate contacts are provided by Glu121, His143, and Trp162. Glu212 (proton donor) is an active-site residue. Residues Trp217 and Tyr285 each contribute to the substrate site. The active-site Nucleophile is the Glu320. Residues 360–361 (WR) and His377 each bind substrate.

It belongs to the glycosyl hydrolase 26 family. In terms of assembly, homodimer.

It carries out the reaction Random hydrolysis of (1-&gt;4)-beta-D-mannosidic linkages in mannans, galactomannans and glucomannans.. Its function is as follows. Catalyzes the endo hydrolysis of beta-1,4-linked mannan and galactomannan, but displays little activity towards other polysaccharides located in the plant cell wall. Preferentially hydrolyzes the larger oligosaccharides and has greater activity against non-substituted polysaccharides. It displays tight specificity for mannose at both the -2 and the -1 subsites. Appears to act in synergy with alpha-galactosidase (AgaA) to elicit hydrolysis of galactomannan. The chain is Mannan endo-1,4-beta-mannosidase from Cellvibrio japonicus (strain Ueda107) (Pseudomonas fluorescens subsp. cellulosa).